The chain runs to 394 residues: Tryptophan synthase beta chain (394 aa).

Residue K84 is modified to N6-(pyridoxal phosphate)lysine.

It belongs to the TrpB family. Tetramer of two alpha and two beta chains. Pyridoxal 5'-phosphate serves as cofactor.

It carries out the reaction (1S,2R)-1-C-(indol-3-yl)glycerol 3-phosphate + L-serine = D-glyceraldehyde 3-phosphate + L-tryptophan + H2O. Its pathway is amino-acid biosynthesis; L-tryptophan biosynthesis; L-tryptophan from chorismate: step 5/5. In terms of biological role, the beta subunit is responsible for the synthesis of L-tryptophan from indole and L-serine. The polypeptide is Tryptophan synthase beta chain (Clostridium acetobutylicum (strain ATCC 824 / DSM 792 / JCM 1419 / IAM 19013 / LMG 5710 / NBRC 13948 / NRRL B-527 / VKM B-1787 / 2291 / W)).